The following is a 226-amino-acid chain: ATP-dependent dethiobiotin synthetase BioD (226 aa).

An ATP-binding site is contributed by G12–V17. T16 is a binding site for Mg(2+). The active site involves K37. T41 is a binding site for substrate. ATP is bound by residues D49, E108–G111, and P197–G199. D49 and E108 together coordinate Mg(2+).

This sequence belongs to the dethiobiotin synthetase family. As to quaternary structure, homodimer. Requires Mg(2+) as cofactor.

It is found in the cytoplasm. It catalyses the reaction (7R,8S)-7,8-diammoniononanoate + CO2 + ATP = (4R,5S)-dethiobiotin + ADP + phosphate + 3 H(+). Its pathway is cofactor biosynthesis; biotin biosynthesis; biotin from 7,8-diaminononanoate: step 1/2. Functionally, catalyzes a mechanistically unusual reaction, the ATP-dependent insertion of CO2 between the N7 and N8 nitrogen atoms of 7,8-diaminopelargonic acid (DAPA, also called 7,8-diammoniononanoate) to form a ureido ring. The sequence is that of ATP-dependent dethiobiotin synthetase BioD from Mycobacterium avium (strain 104).